The sequence spans 333 residues: MSFNLRNRNFLKLLDFTGKEIEHLIALAQDLKHAKYAGTEQQKLKGKNIALIFEKTSTRTRCAFEVAAHDQGAHVTYIGGGSQMGHKESTKDTARVLGRFYDGIEYRGFGQDVVETLGEHAGVPVWNGLTDEWHPTQIIADWMTMLEHGNGKRLNQMKLAYMGDAKNNMGNSLMVGAAKVGMEIRLVGPKAYWPDPALVAECNELCKISGGKIVITDNVQEGVDSVDFIYGDVWVSMGEPEELWATRINDLAPYQVNMSVITATQNPAVKYMHCLPAFHNDETRVGKKIEEKFNMKGLEVTEDVFESSYTICFDEAENRMHSIKAIMVATLGD.

Carbamoyl phosphate is bound by residues 57 to 60 (STRT), Gln83, Arg107, and 134 to 137 (HPTQ). Residues Asn168, Asp232, and 236 to 237 (SM) each bind L-ornithine. Carbamoyl phosphate contacts are provided by residues 274–275 (CL) and Arg319.

This sequence belongs to the aspartate/ornithine carbamoyltransferase superfamily. OTCase family.

It is found in the cytoplasm. The enzyme catalyses carbamoyl phosphate + L-ornithine = L-citrulline + phosphate + H(+). The protein operates within amino-acid biosynthesis; L-arginine biosynthesis; L-arginine from L-ornithine and carbamoyl phosphate: step 1/3. Reversibly catalyzes the transfer of the carbamoyl group from carbamoyl phosphate (CP) to the N(epsilon) atom of ornithine (ORN) to produce L-citrulline. The polypeptide is Ornithine carbamoyltransferase (Photobacterium profundum (strain SS9)).